The following is a 108-amino-acid chain: Tubulin-specific chaperone A (108 aa).

The residue at position 2 (A2) is an N-acetylalanine.

Belongs to the TBCA family. In terms of assembly, supercomplex made of cofactors A to E. Cofactors A and D function by capturing and stabilizing tubulin in a quasi-native conformation. Cofactor E binds to the cofactor D-tubulin complex; interaction with cofactor C then causes the release of tubulin polypeptides that are committed to the native state.

The protein localises to the cytoplasm. The protein resides in the cytoskeleton. Functionally, tubulin-folding protein; involved in the early step of the tubulin folding pathway. This Rattus norvegicus (Rat) protein is Tubulin-specific chaperone A (Tbca).